We begin with the raw amino-acid sequence, 420 residues long: MKKMSIVGAQWGDEGKGKVVNYFSEKFEWIVRFSGGANAGHTIYYKDKKYVNHMLPSIMPNSQSKGFLGAGMVLDLEKLVEELNILEADFPGMSSKFYIDLEAFLVLPWHKEEDEIIESMRKKPIGTTKRGIGPAYTDKVSREGIKLYYLFDEKMLKERLEDIYYLKSSLYGNKLKTSKDDVFEYLMKTKNELEKLKINYASAVEMGNVFRSTSVLFEGAQGVLLDLDFGTYPFVTSSSCMAHGVSSVGFSTFELDEVYGVLKAYTTRVGSGPFPTEIFGEEAHKIRELGKEYGATTGRPRRVGWLDLPALRYAKIRSGLTGLVITKADVLNGLDKIKVCTHYEVNGKTKDTPSSSYDFFVAKPIYTELNGWKDTNDINFLKYLSYIEEQIGVDIDYISYGPKTEEMCSKNDLILNMENK.

Residues 12-18 and 40-42 each bind GTP; these read GDEGKGK and GHT. Asp13 serves as the catalytic Proton acceptor. The Mg(2+) site is built by Asp13 and Gly40. Residues 13–16, 38–41, Thr128, Arg142, Gln221, Thr236, and Arg299 contribute to the IMP site; these read DEGK and NAGH. His41 (proton donor) is an active-site residue. 295 to 301 serves as a coordination point for substrate; that stretch reads ATTGRPR. GTP is bound by residues Arg301, 327-329, and 399-401; these read KAD and SYG.

The protein belongs to the adenylosuccinate synthetase family. In terms of assembly, homodimer. It depends on Mg(2+) as a cofactor.

The protein resides in the cytoplasm. The catalysed reaction is IMP + L-aspartate + GTP = N(6)-(1,2-dicarboxyethyl)-AMP + GDP + phosphate + 2 H(+). It functions in the pathway purine metabolism; AMP biosynthesis via de novo pathway; AMP from IMP: step 1/2. In terms of biological role, plays an important role in the de novo pathway of purine nucleotide biosynthesis. Catalyzes the first committed step in the biosynthesis of AMP from IMP. This is Adenylosuccinate synthetase from Petrotoga mobilis (strain DSM 10674 / SJ95).